Consider the following 292-residue polypeptide: MELLCCEGTRHAPRAGPDPRLLGDQRVLQSLLRLEERYVPRASYFQCVQREIKPHMRKMLAYWMLEVCEEQRCEEEVFPLAMNYLDRYLSCVPTRKAQLQLLGAVCMLLASKLRETTPLTIEKLCIYTDHSVSPRQLRDWEVLVLGKLKWDLAAVIAHDFLALILHRLSLPRDRQALVKKHAQTFLALCATDYTFAMYPPSMIATGSIGAAVQGLGACSTSGDELTELLAGIAGTEVDCLRACQEQIEAALRESLREAAQTSPSPAPKAPRGSSSQGPSQTSTPTDVTAIHL.

The Cyclin N-terminal domain occupies Val-27 to Leu-152. Residues Leu-255 to Leu-292 are disordered. Phosphoserine occurs at positions 264 and 279. The segment covering Gly-272–Thr-285 has biased composition (low complexity). A Phosphothreonine modification is found at Thr-283.

It belongs to the cyclin family. Cyclin D subfamily. As to quaternary structure, interacts with the CDK4 and CDK6 protein kinases to form a serine/threonine kinase holoenzyme complex. The cyclin subunit imparts substrate specificity to the complex. Interacts with ATF5. Interacts with EIF3K. Component of the ternary complex cyclin D/CDK4/CDKN1B required for nuclear translocation and modulation of CDK4-mediated kinase activity. Can form similar complexes with either CDKN1A or CDKN2A. Post-translationally, phosphorylation at Thr-283 by MAP kinases is required for ubiquitination and degradation by the DCX(AMBRA1) complex. Ubiquitinated by the DCX(AMBRA1) complex during the transition from G1 to S cell phase, leading to its degradation: ubiquitination is dependent on Thr-283 phosphorylation. The DCX(AMBRA1) complex represents the major regulator of CCND3 stability during the G1/S transition. Polyubiquitinated by the SCF(FBXL2) complex, leading to proteasomal degradation.

It localises to the nucleus. It is found in the cytoplasm. In terms of biological role, regulatory component of the cyclin D3-CDK4 (DC) complex that phosphorylates and inhibits members of the retinoblastoma (RB) protein family including RB1 and regulates the cell-cycle during G(1)/S transition. Phosphorylation of RB1 allows dissociation of the transcription factor E2F from the RB/E2F complex and the subsequent transcription of E2F target genes which are responsible for the progression through the G(1) phase. Hypophosphorylates RB1 in early G(1) phase. Cyclin D-CDK4 complexes are major integrators of various mitogenenic and antimitogenic signals. Component of the ternary complex, cyclin D3/CDK4/CDKN1B, required for nuclear translocation and activity of the cyclin D-CDK4 complex. Shows transcriptional coactivator activity with ATF5 independently of CDK4. The polypeptide is G1/S-specific cyclin-D3 (CCND3) (Bos taurus (Bovine)).